The chain runs to 180 residues: Cytochrome c oxidase assembly protein CtaG (180 aa).

The Cytoplasmic portion of the chain corresponds to 1-8 (MSKKSNKS). A helical; Signal-anchor for type II membrane protein transmembrane segment spans residues 9 to 29 (LAFSLLGLIVSMVLLSFAAVP). The Periplasmic portion of the chain corresponds to 30-180 (LYNLFCKVTG…SFFKVRDVKK (151 aa)).

Belongs to the COX11/CtaG family.

The protein localises to the cell inner membrane. In terms of biological role, exerts its effect at some terminal stage of cytochrome c oxidase synthesis, probably by being involved in the insertion of the copper B into subunit I. This is Cytochrome c oxidase assembly protein CtaG from Rickettsia bellii (strain RML369-C).